The primary structure comprises 206 residues: Large ribosomal subunit protein uL4 (206 aa).

Positions A51 to G76 are disordered.

The protein belongs to the universal ribosomal protein uL4 family. Part of the 50S ribosomal subunit.

Its function is as follows. One of the primary rRNA binding proteins, this protein initially binds near the 5'-end of the 23S rRNA. It is important during the early stages of 50S assembly. It makes multiple contacts with different domains of the 23S rRNA in the assembled 50S subunit and ribosome. Functionally, forms part of the polypeptide exit tunnel. The chain is Large ribosomal subunit protein uL4 from Clostridium kluyveri (strain ATCC 8527 / DSM 555 / NBRC 12016 / NCIMB 10680 / K1).